The chain runs to 426 residues: PHD finger-containing protein 6 (426 aa).

Residues 9–59 (RSICETCGHQGWKNSLVTCSKCRIACEHCYCMRESSFETSIHFVCADCSMR) form a PHD-type zinc finger. Zn(2+) is bound by residues Cys-12, Cys-15, Cys-27, Cys-30, His-36, Cys-39, Cys-53, and Cys-56. 2 disordered regions span residues 122–144 (TFRV…TAGF) and 185–205 (RQAS…GDGA).

In terms of assembly, interacts directly with AIPP3/BDT1.

Functionally, together with AIPP3/BDT1, cooperates to form a BAH-PHD bivalent histone reader complex able to read histone H3 lysine 27 trimethylation (H3K27me3) histone marks in order to regulate transcription, especially to prevent early flowering; promotes AIPP3/BDT1 binding to H3K27me3. The polypeptide is PHD finger-containing protein 6 (Arabidopsis thaliana (Mouse-ear cress)).